The sequence spans 354 residues: Peptide chain release factor 1 (354 aa).

N5-methylglutamine is present on Gln233.

It belongs to the prokaryotic/mitochondrial release factor family. Methylated by PrmC. Methylation increases the termination efficiency of RF1.

It localises to the cytoplasm. Functionally, peptide chain release factor 1 directs the termination of translation in response to the peptide chain termination codons UAG and UAA. The chain is Peptide chain release factor 1 from Clostridioides difficile (strain 630) (Peptoclostridium difficile).